The following is a 162-amino-acid chain: General odorant-binding protein 2 (162 aa).

A signal peptide spans 1-18 (MTSKSCLLLVAMVTLTTS). Intrachain disulfides connect Cys40–Cys75, Cys71–Cys129, and Cys118–Cys138.

This sequence belongs to the PBP/GOBP family. As to expression, antenna.

Present in the aqueous fluid surrounding olfactory sensory dendrites and are thought to aid in the capture and transport of hydrophobic odorants into and through this fluid. This is General odorant-binding protein 2 from Heliothis virescens (Tobacco budworm moth).